The following is a 717-amino-acid chain: Scinderin (717 aa).

Residues 1–363 are actin-severing; the sequence is MAPERHPPAF…DGFGKVYVTE (363 aa). The stretch at 28–108 is one Gelsolin-like 1 repeat; the sequence is ELVPVPPSRH…IQGYESNEFV (81 aa). A 1,2-diacyl-sn-glycero-3-phospho-(1D-myo-inositol-4,5-bisphosphate) contacts are provided by residues 112–119 and 138–146; these read KGGIKYKA and RLLHIKGRR. Gelsolin-like repeat units lie at residues 148–220, 265–340, 408–483, 526–590, and 628–703; these read VRAT…PDEL, VVAE…TPIF, RVPV…PHLL, AEVD…EEFW, and IEEV…PPTF. Residues 364–715 are ca(2+)-dependent actin binding; the sequence is RVAKIEQIEF…WFLAWDSNKW (352 aa). Residues N538, D539, E562, D643, D644, and E666 each coordinate Ca(2+).

It belongs to the villin/gelsolin family.

It is found in the cytoplasm. The protein resides in the cytoskeleton. It localises to the cell projection. Its subcellular location is the podosome. Functionally, ca(2+)-dependent actin filament-severing protein that has a regulatory function in exocytosis by affecting the organization of the microfilament network underneath the plasma membrane. In vitro, also has barbed end capping and nucleating activities in the presence of Ca(2+). Severing activity is inhibited by phosphatidylinositol 4,5-bis-phosphate (PIP2). Required for megakaryocyte differentiation, maturation, polyploidization and apoptosis with the release of platelet-like particles. Plays a role in osteoclastogenesis (OCG) and actin cytoskeletal organization in osteoclasts. Regulates chondrocyte proliferation and differentiation. Inhibits cell proliferation and tumorigenesis. Signaling is mediated by MAPK, p38 and JNK pathways. The chain is Scinderin (SCIN) from Gallus gallus (Chicken).